Consider the following 272-residue polypeptide: Alcohol dehydrogenase-related 31 kDa protein (272 aa).

NAD(+) is bound at residue 11 to 34 (YVADCGGIALETSKVLMTKNIAKL). Ser-139 is a substrate binding site. Tyr-152 acts as the Proton acceptor in catalysis.

This sequence belongs to the short-chain dehydrogenases/reductases (SDR) family.

This Drosophila mauritiana (Fruit fly) protein is Alcohol dehydrogenase-related 31 kDa protein (Adhr).